The primary structure comprises 142 residues: Large ribosomal subunit protein uL11 (142 aa).

The protein belongs to the universal ribosomal protein uL11 family. Part of the ribosomal stalk of the 50S ribosomal subunit. Interacts with L10 and the large rRNA to form the base of the stalk. L10 forms an elongated spine to which L12 dimers bind in a sequential fashion forming a multimeric L10(L12)X complex. In terms of processing, one or more lysine residues are methylated.

Forms part of the ribosomal stalk which helps the ribosome interact with GTP-bound translation factors. This chain is Large ribosomal subunit protein uL11, found in Acidithiobacillus ferrooxidans (strain ATCC 23270 / DSM 14882 / CIP 104768 / NCIMB 8455) (Ferrobacillus ferrooxidans (strain ATCC 23270)).